Consider the following 228-residue polypeptide: uncharacterized protein (228 aa).

It localises to the mitochondrion. This is an uncharacterized protein from Emericella nidulans (Aspergillus nidulans).